We begin with the raw amino-acid sequence, 152 residues long: Transcriptional regulator MraZ (152 aa).

2 consecutive SpoVT-AbrB domains span residues 5–52 (VNQL…PLPE) and 81–124 (AQEL…DESL).

Belongs to the MraZ family. As to quaternary structure, forms oligomers.

The protein localises to the cytoplasm. The protein resides in the nucleoid. In Halorhodospira halophila (strain DSM 244 / SL1) (Ectothiorhodospira halophila (strain DSM 244 / SL1)), this protein is Transcriptional regulator MraZ.